The following is a 129-amino-acid chain: Keratin-associated protein 5-6 (129 aa).

6 tandem repeats follow at residues 28-31 (CCVP), 34-37 (CCKP), 40-43 (CCVP), 90-93 (CCKP), 109-112 (CCKP), and 119-122 (CCVP). The tract at residues 28–112 (CCVPICCCKP…SCCQSSCCKP (85 aa)) is 6 X 4 AA repeats of C-C-X-P.

Belongs to the KRTAP type 5 family. In terms of assembly, interacts with hair keratins. Expressed in hair root and not in skin. Expressed also in liver and skeletal muscle.

Functionally, in the hair cortex, hair keratin intermediate filaments are embedded in an interfilamentous matrix, consisting of hair keratin-associated protein (KRTAP), which are essential for the formation of a rigid and resistant hair shaft through their extensive disulfide bond cross-linking with abundant cysteine residues of hair keratins. The matrix proteins include the high-sulfur and high-glycine-tyrosine keratins. The sequence is that of Keratin-associated protein 5-6 (KRTAP5-6) from Homo sapiens (Human).